The following is a 573-amino-acid chain: Developmental and secondary metabolism regulator veA (573 aa).

Positions 1–11 (MATLAAPPPPL) are enriched in pro residues. Disordered stretches follow at residues 1-24 (MATL…SRIT) and 39-63 (QPKR…DPPP). Residues 27–230 (GKKITYKLNI…AEQGCRVRIR (204 aa)) enclose the Velvet domain. The Nuclear localization signal motif lies at 41 to 46 (KRARAC). Phosphothreonine is present on residues Thr167 and Thr170. At Ser183 the chain carries Phosphoserine. 3 disordered regions span residues 236–295 (RRRG…RRPS), 307–367 (YQRP…SYQS), and 384–573 (SHIP…ATMR). The span at 241-260 (KRTEDYDYDNERGYNNRRPD) shows a compositional bias: basic and acidic residues. At Tyr254 the chain carries Phosphotyrosine. Pro residues-rich tracts occupy residues 318–339 (SSTP…PSTP) and 347–361 (PAPP…PPLH). The span at 387-412 (PQQTTTPTHPYSPRSSISHSRNQSIS) shows a compositional bias: low complexity. A compositionally biased stretch (polar residues) spans 452–493 (PSVNSRSKTPSNMITSLPPIQSLSELPSTTSQPSSAIGSSPA). The PEST stretch occupies residues 459-498 (KTPSNMITSLPPIQSLSELPSTTSQPSSAIGSSPANEPGP). Residues 510-522 (RTYEESFGHDDRP) show a composition bias toward basic and acidic residues.

Belongs to the velvet family. VeA subfamily. Component of the heterotrimeric velvet complex composed of laeA, veA and velB; VeA acting as a bridging protein between laeA and velB. Interacts with the light-sensing phytochrome fphA. Interacts with llmF. Post-translationally, phosphorylated at Thr-167, Thr-170, Ser-183 and Tyr-254. Thr-167 should be phosphorylated and T170 and S183 should be dephosphorylated to achieve light induction of conidiation. Phosphorylation of Ser-183 and Tyr-254 influence sterigmatocystin production in a light-independent manner. Phosphorylation of Thr-167 and Thr-170 modulates expression of veA.

The protein resides in the nucleus. It localises to the cytoplasm. Its function is as follows. Component of the velvet transcription factor complex that controls sexual/asexual developmental ratio in response to light, promoting sexual development in the darkness while stimulating asexual sporulation under illumination. The velvet complex acts as a global regulator for secondary metabolite gene expression. Controls the expression of the sterigmatocystin and penicillin gene clusters. Represses the cryptic ors gene cluster producing orsellinic acid and its F9775 derivatives in a laeA-independent manner. Required for full induction of faoA gene expression by fructosyl amines. Positively regulates the expression of the early sexual development gene esdC. Controls the expression of mannoprotein mnpA. The protein is Developmental and secondary metabolism regulator veA of Emericella nidulans (strain FGSC A4 / ATCC 38163 / CBS 112.46 / NRRL 194 / M139) (Aspergillus nidulans).